The sequence spans 433 residues: Transcription factor elt-2 (433 aa).

Disordered stretches follow at residues 1-47 (MDNN…ELPR) and 194-235 (GQPP…RQGL). Residues 27-43 (PTQNMDPPEQNNESQLS) show a composition bias toward polar residues. Over residues 211 to 234 (AKQSSKKSSSSNRGSNGSASRRQG) the composition is skewed to low complexity. A GATA-type zinc finger spans residues 237–261 (CSNCNGTNTTLWRRNAEGDPVCNAC). The tract at residues 275–332 (SMKKEGALQTRKRKSKSGDSSTPSTSRARERKFERASSSTEKAQRSSNRRAGSAKADR) is disordered. Over residues 310–324 (ASSSTEKAQRSSNRR) the composition is skewed to polar residues.

Interacts with lag-1. Interacts with pha-4. Interacts with rpt-6. Post-translationally, may be ubiquitinated in response to infection by B.pseudomallei. Expressed in the intestine.

The protein resides in the nucleus. In terms of biological role, transcriptional activator that binds to the consensus sequence 5'-[AT]GATA[AG]-3'. Predominantly directs the transcription of intestinal genes such as ges-1, cpr-6, pho-1, ftn-1, vit-2 and lev-11, and itself. Required for gut-specific differentiation, specifically acting with the GATA region-binding transcription factor elt-7 to control normal gene expression and promote normal formation of the intestine. Regulates intestinal gene expression in response to hypoxia to promote longevity. Modulation of longevity may, in part, be the result of regulation of expression of daf-16 isoforms d and f in the intestine. Regulates tissue specific gene expression at basal levels and in response to bacterial infection in the intestine to control innate immunity. Plays a role in the induction of metal-responsive genes, activating gene expression from zinc-activated promoters and iron-dependent promoters and enhancers. May regulate the expression of genes that control sensitivity to oxidative stress, in a mab-3-dependent manner, and osmotic stress, in conjunction with the GATA region-binding transcription factor elt-3. May play a role in sphingolipid signaling by regulating the expression of the sphingosine-1-phosphate degrading enzyme, sphingosine-1-phosphate lyase. May act with the Notch signaling pathway to promote endodermal gene expression. Has a protective role in response to infection by Gram-negative bacteria such as S.enterica, E.coli, P.aeruginosa and B.pseudomallei, Gram-positive bacterium E.faecalis and fungal pathogen C.neoformans. An association with the 26S proteasome regulatory subunit rpt-6, in part, controls gene expression in response to infection by P.aeruginosa. Regulates gene expression during the recovery phase following a bacterial infection. May act with p38-activated transcription factors to control p38 gene induction in response to bacterial infection. Controls lysosome formation in the intestine by controlling lysosomal gene expression. This is Transcription factor elt-2 from Caenorhabditis elegans.